The sequence spans 234 residues: Thymidylate kinase (234 aa).

20 to 27 (GIDASGKT) serves as a coordination point for ATP.

Belongs to the thymidylate kinase family.

It carries out the reaction dTMP + ATP = dTDP + ADP. In terms of biological role, phosphorylation of dTMP to form dTDP in both de novo and salvage pathways of dTTP synthesis. The polypeptide is Thymidylate kinase (Mycoplasmopsis pulmonis (strain UAB CTIP) (Mycoplasma pulmonis)).